A 706-amino-acid chain; its full sequence is Transmembrane 9 superfamily member 3 (706 aa).

The N-terminal stretch at 1 to 33 (MRVRPKRSVITLMAIVVVMLILRNQFYSSRTRG) is a signal peptide. Over 34 to 290 (HGQEPVISSS…LSDEQSIQFH (257 aa)) the chain is Lumenal. A helical membrane pass occupies residues 291–311 (WMSLANSVGIVLSISFITLII). Residues 312 to 371 (YVRVMYTDKSNSKSPKYMINIEGIETEDDLDDDKYGKYSVYTVAKDWIQNGRPNLFGLKV) are Cytoplasmic-facing. The chain crosses the membrane as a helical span at residues 372 to 392 (LILLVSFGVQFLFTIIGSLTI). The Lumenal portion of the chain corresponds to 393 to 405 (SCSMNKLHNVRNS). Residues 406-426 (VLTMAILFFVLGAFMASFVGT) traverse the membrane as a helical segment. The Cytoplasmic segment spans residues 427–456 (RLSMVTKTKRTKANYLDDNRYLKDYKKFSP). A helical transmembrane segment spans residues 457-477 (IFTILCGSSLPGIVMVSTFLL). At 478 to 494 (NSIVWAHDSTSALPFKT) the chain is on the lumenal side. Residues 495–515 (IVFFMSIYFIVCIPLSLFGGI) form a helical membrane-spanning segment. The Cytoplasmic portion of the chain corresponds to 516 to 553 (VANNIPLPQYWLSGITKDESNSDGNGLFVPKSRAKFNP). A helical transmembrane segment spans residues 554–574 (LVYCGIYLCGIFPLLVIYVEM). At 575–592 (QYVYKSLWLEKTTFYYFY) the chain is on the lumenal side. A helical membrane pass occupies residues 593-613 (GFLFLSIILLCVLTMEISIIG). Residues 614-637 (SYLLMRFCFEDKVVRNNWRWKCFE) are Cytoplasmic-facing. A helical transmembrane segment spans residues 638 to 658 (MGFSGGVYMELYSLYYIFAVL). At 659-665 (NIHGFSS) the chain is on the lumenal side. A helical transmembrane segment spans residues 666–686 (ILISICYSLIFNVMCSLGLGA). Topologically, residues 687–706 (LSYLTASWFINKIYHQKVNL) are cytoplasmic.

It belongs to the nonaspanin (TM9SF) (TC 9.A.2) family.

The protein localises to the golgi apparatus membrane. Its function is as follows. With EMP70 and TMN2, plays a critical role in the late stages of a nutrient-controlled pathway notably regulating FLO11 gene expression. Acts downstream of RAS2 and TOR. Essential for cell adhesion and filamentous growth. May play a role as effector of cellular copper homeostasis. The sequence is that of Transmembrane 9 superfamily member 3 (TMN3) from Saccharomyces cerevisiae (strain ATCC 204508 / S288c) (Baker's yeast).